The chain runs to 271 residues: Intercellular adhesion molecule 4 (271 aa).

The signal sequence occupies residues 1-22 (MGSLFPLSLLFFLAAAYPGVGS). The Extracellular segment spans residues 23 to 240 (ALGRRTKRAQ…MLAWSPAPTA (218 aa)). Ig-like C2-type domains follow at residues 62-124 (GKSV…TRWA) and 146-217 (GRKY…LNLD). N-linked (GlcNAc...) asparagine glycans are attached at residues Asn68, Asn78, Asn190, and Asn223. Intrachain disulfides connect Cys69/Cys113, Cys69/Cys117, Cys73/Cys117, and Cys153/Cys210. The chain crosses the membrane as a helical span at residues 241 to 261 (LASGSIAALVGILLTVGAAYL). The Cytoplasmic portion of the chain corresponds to 262-271 (CKCLAMKSQA).

It belongs to the immunoglobulin superfamily. ICAM family. N- and O-glycosylated. As to expression, erythrocytes.

It is found in the cell membrane. The protein resides in the secreted. In terms of biological role, ICAM proteins are ligands for the leukocyte adhesion protein LFA-1 (integrin alpha-L/beta-2). ICAM4 is also a ligand for alpha-4/beta-1 and alpha-V integrins. This chain is Intercellular adhesion molecule 4 (ICAM4), found in Homo sapiens (Human).